A 433-amino-acid polypeptide reads, in one-letter code: Trigger factor (433 aa).

A PPIase FKBP-type domain is found at Glu161 to Pro246.

Belongs to the FKBP-type PPIase family. Tig subfamily.

It is found in the cytoplasm. It carries out the reaction [protein]-peptidylproline (omega=180) = [protein]-peptidylproline (omega=0). In terms of biological role, involved in protein export. Acts as a chaperone by maintaining the newly synthesized protein in an open conformation. Functions as a peptidyl-prolyl cis-trans isomerase. This Edwardsiella ictaluri (strain 93-146) protein is Trigger factor.